Consider the following 168-residue polypeptide: Lipoprotein signal peptidase (168 aa).

The next 3 helical transmembrane spans lie at 8 to 28 (LYYL…WLVV), 61 to 81 (GQFW…VIYI), and 91 to 111 (FGIA…DRIF). Catalysis depends on residues D117 and D135. A helical transmembrane segment spans residues 128 to 148 (FPIFNVADAALTIGVALMFIY).

This sequence belongs to the peptidase A8 family.

It localises to the cell membrane. The catalysed reaction is Release of signal peptides from bacterial membrane prolipoproteins. Hydrolyzes -Xaa-Yaa-Zaa-|-(S,diacylglyceryl)Cys-, in which Xaa is hydrophobic (preferably Leu), and Yaa (Ala or Ser) and Zaa (Gly or Ala) have small, neutral side chains.. The protein operates within protein modification; lipoprotein biosynthesis (signal peptide cleavage). In terms of biological role, this protein specifically catalyzes the removal of signal peptides from prolipoproteins. The polypeptide is Lipoprotein signal peptidase (Anoxybacillus flavithermus (strain DSM 21510 / WK1)).